Here is a 270-residue protein sequence, read N- to C-terminus: Dehydrodolichyl diphosphate synthase (270 aa).

The protein belongs to the UPP synthase family.

It localises to the endoplasmic reticulum membrane. It functions in the pathway protein modification; protein glycosylation. In terms of biological role, cis-prenyl transferase that adds multiple copies of isopentenyl pyrophosphate (IPP) to farnesyl pyrophosphate (FPP) to produce dehydrodolichyl diphosphate (Dedol-PP). The protein is Dehydrodolichyl diphosphate synthase (RER2) of Encephalitozoon cuniculi (strain GB-M1) (Microsporidian parasite).